Here is a 446-residue protein sequence, read N- to C-terminus: Chromosomal replication initiator protein DnaA (446 aa).

The domain I, interacts with DnaA modulators stretch occupies residues 1 to 72 (MKNISDLWNQ…ADTIYDLTGE (72 aa)). The domain II stretch occupies residues 72 to 109 (EELSIKFVIPQNQNEEDFMPKSPIKKMSKEEPADFPQN). A domain III, AAA+ region region spans residues 110 to 326 (MLNPKYTFDT…GALIRVVAYS (217 aa)). G154, G156, K157, and T158 together coordinate ATP. The interval 327-446 (SLINKDINAD…QIKEIKEQLR (120 aa)) is domain IV, binds dsDNA.

This sequence belongs to the DnaA family. In terms of assembly, oligomerizes as a right-handed, spiral filament on DNA at oriC.

Its subcellular location is the cytoplasm. Functionally, plays an essential role in the initiation and regulation of chromosomal replication. ATP-DnaA binds to the origin of replication (oriC) to initiate formation of the DNA replication initiation complex once per cell cycle. Binds the DnaA box (a 9 base pair repeat at the origin) and separates the double-stranded (ds)DNA. Forms a right-handed helical filament on oriC DNA; dsDNA binds to the exterior of the filament while single-stranded (ss)DNA is stabiized in the filament's interior. The ATP-DnaA-oriC complex binds and stabilizes one strand of the AT-rich DNA unwinding element (DUE), permitting loading of DNA polymerase. After initiation quickly degrades to an ADP-DnaA complex that is not apt for DNA replication. Binds acidic phospholipids. The polypeptide is Chromosomal replication initiator protein DnaA (Bacillus licheniformis (strain ATCC 14580 / DSM 13 / JCM 2505 / CCUG 7422 / NBRC 12200 / NCIMB 9375 / NCTC 10341 / NRRL NRS-1264 / Gibson 46)).